Consider the following 1461-residue polypeptide: Neogenin (1461 aa).

Positions 1-33 (MAAERGARRLLSTPSFWLYCLLLLGRRAPGAAA) are cleaved as a signal peptide. The Extracellular portion of the chain corresponds to 34–1105 (ARSGSAPQSP…PTSPLDSNML (1072 aa)). 4 Ig-like C2-type domains span residues 52-141 (PFYF…TIIS), 152-238 (PRFT…VELK), 243-336 (PEVI…AELT), and 341-426 (PEFL…AQLI). An N-linked (GlcNAc...) asparagine glycan is attached at asparagine 73. 3 disulfides stabilise this stretch: cysteine 74–cysteine 129, cysteine 173–cysteine 221, and cysteine 270–cysteine 320. A glycan (N-linked (GlcNAc...) asparagine) is linked at asparagine 210. Residue asparagine 326 is glycosylated (N-linked (GlcNAc...) asparagine). Cysteine 362 and cysteine 410 are oxidised to a cystine. Fibronectin type-III domains are found at residues 441-535 (APRD…TQPE), 541-631 (PAPN…TLSD), 636-731 (APQN…TFES), 741-831 (VPSS…RPHT), 856-952 (PPVG…TFEL), and 957-1054 (PPKD…TPKA). Asparagine 470 and asparagine 489 each carry an N-linked (GlcNAc...) asparagine glycan. N-linked (GlcNAc...) asparagine glycans are attached at residues asparagine 639 and asparagine 715. The N-linked (GlcNAc...) asparagine glycan is linked to asparagine 909. The tract at residues 1041–1097 (GPMSEAVQFRTPKADSSDKMPNDQASGSGGKGSRLPDLGSDYKPPMSGSNSPHGSPT) is disordered. Basic and acidic residues predominate over residues 1052–1061 (PKADSSDKMP). Residues 1087-1097 (SGSNSPHGSPT) are compositionally biased toward polar residues. The chain crosses the membrane as a helical span at residues 1106–1126 (LVIIVSVGVITIVVVVIIAVF). Residues 1127 to 1461 (CTRRTTSHQK…MKDLNAITTA (335 aa)) are Cytoplasmic-facing. 4 disordered regions span residues 1138–1160 (KRAA…DVKP), 1174–1206 (PIDK…SMDS), 1235–1276 (PKMM…PARS), and 1289–1381 (TSMS…ALPS). Phosphoserine occurs at positions 1178 and 1194. Residues 1191–1206 (PRNSQDITPVDNSMDS) are compositionally biased toward polar residues. Threonine 1198 bears the Phosphothreonine mark. Composition is skewed to polar residues over residues 1289–1322 (TSMS…TCCT) and 1330–1349 (ATSS…QSLP). Residues 1366–1375 (AIPPPGPPTY) are compositionally biased toward pro residues. Serine 1401 is modified (phosphoserine). At threonine 1404 the chain carries Phosphothreonine. Residues serine 1432, serine 1434, and serine 1435 each carry the phosphoserine modification.

This sequence belongs to the immunoglobulin superfamily. DCC family. Interacts with MYO10. Interacts with RGMA and RGMB. Interacts with BMP2, BMP4, BMP6, and BMP7. As to expression, widely expressed and also in cancer cell lines.

The protein localises to the cell membrane. In terms of biological role, multi-functional cell surface receptor regulating cell adhesion in many diverse developmental processes, including neural tube and mammary gland formation, myogenesis and angiogenesis. Receptor for members of the BMP, netrin, and repulsive guidance molecule (RGM) families. Netrin-Neogenin interactions result in a chemoattractive axon guidance response and cell-cell adhesion, the interaction between NEO1/Neogenin and RGMa and RGMb induces a chemorepulsive response. The sequence is that of Neogenin (NEO1) from Homo sapiens (Human).